The following is a 247-amino-acid chain: MTTSAQSVLELLPAVDIVDGQAVRLLQGEAGSETSYGTPLEAALNWQNDGAEWVHMVDLDAAFGRGNNAALISDVVSQLNVKVELSGGLRDDESLERALELGVARVNLGTAALENPEWTRKAIDRFGDKIAVGLDVRGTTLAGRGWTKEGGDLWEVLARLEDAGCARYVVTDVTKDGTLQGPNVELLRQMVEKTGKPVVASGGISSLEDLRVLRELVPLGVEGAIVGKALYAGAFTLPEALDVAGRR.

Aspartate 16 (proton acceptor) is an active-site residue. Catalysis depends on aspartate 135, which acts as the Proton donor.

It belongs to the HisA/HisF family.

It is found in the cytoplasm. The catalysed reaction is 1-(5-phospho-beta-D-ribosyl)-5-[(5-phospho-beta-D-ribosylamino)methylideneamino]imidazole-4-carboxamide = 5-[(5-phospho-1-deoxy-D-ribulos-1-ylimino)methylamino]-1-(5-phospho-beta-D-ribosyl)imidazole-4-carboxamide. It functions in the pathway amino-acid biosynthesis; L-histidine biosynthesis; L-histidine from 5-phospho-alpha-D-ribose 1-diphosphate: step 4/9. This chain is 1-(5-phosphoribosyl)-5-[(5-phosphoribosylamino)methylideneamino] imidazole-4-carboxamide isomerase, found in Paenarthrobacter aurescens (strain TC1).